Consider the following 407-residue polypeptide: Protein arginine N-methyltransferase 2 (407 aa).

One can recognise an RMT2 domain in the interval 186–407 (TAADQATYLK…YYYHPEIRFA (222 aa)). Residues Tyr193, Met223, 246–251 (FGMGII), 267–269 (EAH), 294–295 (WQ), and Asp315 contribute to the S-adenosyl-L-methionine site.

This sequence belongs to the class I-like SAM-binding methyltransferase superfamily. RMT2 methyltransferase family. In terms of assembly, monomer.

Its subcellular location is the cytoplasm. It localises to the nucleus. S-adenosyl-L-methionine-dependent protein-arginine N-methyltransferase that methylates the delta-nitrogen atom of arginine residues to form N5-methylarginine (type IV) in target proteins. Monomethylates ribosomal protein L12. The protein is Protein arginine N-methyltransferase 2 of Kluyveromyces lactis (strain ATCC 8585 / CBS 2359 / DSM 70799 / NBRC 1267 / NRRL Y-1140 / WM37) (Yeast).